We begin with the raw amino-acid sequence, 911 residues long: Alpha-actinin-4 (911 aa).

An actin-binding region spans residues Met-1–Ser-269. A disordered region spans residues Asn-8–Tyr-31. An interaction with VCL region spans residues Gln-12–Gly-26. The residue at position 31 (Tyr-31) is a Phosphotyrosine. Residues Arg-40–Asn-61 are interaction with VCL. 2 consecutive Calponin-homology (CH) domains span residues Lys-50–Ala-154 and Thr-163–Ser-269. An LXXLL motif motif is present at residues Leu-84–Leu-88. The segment at Lys-108 to Leu-126 is interaction with VCL. N6-acetyllysine is present on Lys-114. A polyphosphoinositide (PIP2)-binding region spans residues Thr-177–Trp-192. At Lys-214 the chain carries N6-acetyllysine. A Phosphothreonine modification is found at Thr-249. Spectrin repeat units lie at residues His-293–Asn-403, His-413–Lys-518, Gln-528–Glu-639, and His-649–Asn-752. N6-acetyllysine occurs at positions 592 and 625. Position 696 is a phosphoserine (Ser-696). Positions Trp-736–Leu-911 are mediates interaction with MICALL2. 2 EF-hand domains span residues Glu-765–Asp-800 and Gln-806–Asp-841. Asp-778 serves as a coordination point for Ca(2+). Lys-779 bears the N6-acetyllysine mark. Ca(2+) contacts are provided by Asp-780 and Glu-789. N6-acetyllysine is present on Lys-859. At Ser-909 the chain carries Phosphoserine.

Belongs to the alpha-actinin family. As to quaternary structure, homodimer; antiparallel. Identified in a IGF2BP1-dependent mRNP granule complex containing untranslated mRNAs. Component of the CART complex, at least composed of ACTN4, HGS/HRS, MYO5B and TRIM3. Binds TRIM3 at the N-terminus. Interacts with MAGI1. Interacts with PDLIM2. Identified in a complex with CASK, IQGAP1, MAGI2, NPHS1, SPTAN1 and SPTBN1. Interacts with MICALL2 (preferentially in opened conformation); stimulated by RAB13 activation. Interacts with PPARG and RARA. Binds to VCL; this interaction triggers VCL conformational changes. Interacts with SEPTIN14. Interacts with IGSF8.

It localises to the nucleus. The protein resides in the cytoplasm. It is found in the cell junction. The protein localises to the cytoskeleton. Its subcellular location is the stress fiber. It localises to the perinuclear region. Functionally, F-actin cross-linking protein which is thought to anchor actin to a variety of intracellular structures. This is a bundling protein. Probably involved in vesicular trafficking via its association with the CART complex. The CART complex is necessary for efficient transferrin receptor recycling but not for EGFR degradation. Involved in tight junction assembly in epithelial cells probably through interaction with MICALL2. Links MICALL2 to the actin cytoskeleton and recruits it to the tight junctions. May also function as a transcriptional coactivator, stimulating transcription mediated by the nuclear hormone receptors PPARG and RARA. Association with IGSF8 regulates the immune synapse formation and is required for efficient T-cell activation. The polypeptide is Alpha-actinin-4 (Bos taurus (Bovine)).